Reading from the N-terminus, the 133-residue chain is Profilin (133 aa).

Belongs to the profilin family. Interacts with host TPM1. Interacts with protein A25.

Its subcellular location is the host cytoplasm. In terms of biological role, participates in either intracellular transport of viral proteins or intercellular spread of the virus. Cellular profilins modulate actin filament dynamics (polymerization and depolymerization) via direct binding to actin through an actin-binding domain as well as by modulation of other actin-binding proteins. In contrast to cellular homologs, the poxvirus profilins seem to bind actin only weakly. This chain is Profilin (OPG171), found in Variola virus (isolate Human/India/Ind3/1967) (VARV).